Here is an 87-residue protein sequence, read N- to C-terminus: Mitotic-spindle organizing protein 1 (87 aa).

The protein belongs to the MOZART1 family. Part of the gamma-tubulin complex.

The protein localises to the cytoplasm. The protein resides in the cytoskeleton. It is found in the microtubule organizing center. Its subcellular location is the spindle pole body. Required for gamma-tubulin complex recruitment to the microtubule organizing center (MTOC). This chain is Mitotic-spindle organizing protein 1, found in Chaetomium globosum (strain ATCC 6205 / CBS 148.51 / DSM 1962 / NBRC 6347 / NRRL 1970) (Soil fungus).